The sequence spans 226 residues: 3-dehydroquinate dehydratase (226 aa).

3-dehydroquinate-binding positions include 33–35 (ELR) and Arg65. The active-site Proton donor/acceptor is the His120. Catalysis depends on Lys147, which acts as the Schiff-base intermediate with substrate. 3-dehydroquinate contacts are provided by Arg186, Ser205, and Gln209.

The protein belongs to the type-I 3-dehydroquinase family. Homodimer.

It catalyses the reaction 3-dehydroquinate = 3-dehydroshikimate + H2O. It functions in the pathway metabolic intermediate biosynthesis; chorismate biosynthesis; chorismate from D-erythrose 4-phosphate and phosphoenolpyruvate: step 3/7. Functionally, involved in the third step of the chorismate pathway, which leads to the biosynthesis of aromatic amino acids. Catalyzes the cis-dehydration of 3-dehydroquinate (DHQ) and introduces the first double bond of the aromatic ring to yield 3-dehydroshikimate. The protein is 3-dehydroquinate dehydratase of Thermodesulfovibrio yellowstonii (strain ATCC 51303 / DSM 11347 / YP87).